Consider the following 206-residue polypeptide: Glycerol-3-phosphate acyltransferase (206 aa).

A run of 5 helical transmembrane segments spans residues 3-23, 51-71, 83-103, 113-133, and 162-182; these read LGWL…SYII, VGPA…AVVV, FAAA…YYGF, IGVL…IAIG, and WFGY…LSMW.

This sequence belongs to the PlsY family. Probably interacts with PlsX.

It localises to the cell membrane. The catalysed reaction is an acyl phosphate + sn-glycerol 3-phosphate = a 1-acyl-sn-glycero-3-phosphate + phosphate. It functions in the pathway lipid metabolism; phospholipid metabolism. Its function is as follows. Catalyzes the transfer of an acyl group from acyl-phosphate (acyl-PO(4)) to glycerol-3-phosphate (G3P) to form lysophosphatidic acid (LPA). This enzyme utilizes acyl-phosphate as fatty acyl donor, but not acyl-CoA or acyl-ACP. The polypeptide is Glycerol-3-phosphate acyltransferase (Halalkalibacterium halodurans (strain ATCC BAA-125 / DSM 18197 / FERM 7344 / JCM 9153 / C-125) (Bacillus halodurans)).